We begin with the raw amino-acid sequence, 561 residues long: Zinc finger protein 394 (561 aa).

At S12 the chain carries Phosphoserine. K40 is covalently cross-linked (Glycyl lysine isopeptide (Lys-Gly) (interchain with G-Cter in SUMO2)). The interval 43-62 is disordered; it reads EDSLGSWEPSYPAASPDPET. An SCAN box domain is found at 64 to 146; it reads RLHFRQLRYQ…AVVRALQRAL (83 aa). The region spanning 155-230 is the KRAB domain; it reads VTFEDMAVSL…LQEAFQGKRP (76 aa). Glycyl lysine isopeptide (Lys-Gly) (interchain with G-Cter in SUMO2) cross-links involve residues K203 and K228. Basic and acidic residues predominate over residues 238–247; that stretch reads THEDRVEKQS. The disordered stretch occupies residues 238-283; that stretch reads THEDRVEKQSGDPLPLKLENSPEAEGFNSISDVNKNGSIEGEDSKN. K254 participates in a covalent cross-link: Glycyl lysine isopeptide (Lys-Gly) (interchain with G-Cter in SUMO2). A compositionally biased stretch (polar residues) spans 265–274; that stretch reads NSISDVNKNG. K282 participates in a covalent cross-link: Glycyl lysine isopeptide (Lys-Gly) (interchain with G-Cter in SUMO2). C2H2-type zinc fingers lie at residues 358–380, 386–408, 414–436, 442–463, 469–491, 497–519, and 525–547; these read YKCGNCGKSFKQRSDLFRHQRIH, YGCQECGKSFSQSAALTKHQRTH, YTCLKCGERFRQNSHLNRHQSTH, FKCEECGETCHISNLFRHQRLH, YKCEECEKSFKQRSDLFKHHRIH, YGCSVCGKRFNQSATLIKHQRIH, and YKCLECGERFRQSTHLIRHQRIH. A Glycyl lysine isopeptide (Lys-Gly) (interchain with G-Cter in SUMO2) cross-link involves residue K443.

This sequence belongs to the krueppel C2H2-type zinc-finger protein family.

The protein resides in the nucleus. In terms of biological role, may be involved in transcriptional regulation. The sequence is that of Zinc finger protein 394 (ZNF394) from Pan paniscus (Pygmy chimpanzee).